The following is a 331-amino-acid chain: Isopenicillin N synthase (331 aa).

Isopenicillin N-binding residues include R87, Y91, S183, and Y189. Residues R87, Y91, S183, Y189, H214, and D216 each contribute to the N-[(5S)-5-amino-5-carboxypentanoyl]-L-cysteinyl-D-valine site. The region spanning 181–288 (LSSVVLIRYP…RQSLPFFVNL (108 aa)) is the Fe2OG dioxygenase domain. Fe(2+)-binding residues include H214, D216, and H270. Residue R279 coordinates 2-oxoglutarate. Residue S281 coordinates isopenicillin N. Residue S281 participates in N-[(5S)-5-amino-5-carboxypentanoyl]-L-cysteinyl-D-valine binding.

This sequence belongs to the iron/ascorbate-dependent oxidoreductase family. It depends on Fe(2+) as a cofactor.

The protein localises to the cytoplasm. It localises to the cytosol. It catalyses the reaction N-[(5S)-5-amino-5-carboxypentanoyl]-L-cysteinyl-D-valine + O2 = isopenicillin N + 2 H2O. It functions in the pathway antibiotic biosynthesis; penicillin G biosynthesis; penicillin G from L-alpha-aminoadipate and L-cysteine and L-valine: step 2/3. Its function is as follows. Isopenicillin N synthase; part of the gene cluster that mediates the biosynthesis of penicillin, the world's most important antibiotic. The first step of the pathway is performed by the trimodular NRPS acvA that produces the tripeptide N-[(5S)-5-amino-5-carboxypentanoyl]-L-cysteinyl-D-valine (LLD-ACV or ACV) via condensation of the 3 residues L-2-aminoadipate, L-cysteine and L-valine. The precursor amino acids for penicillin biosynthesis are withdrawn from the vacuolar amino acid pool by the MFS-type transporter penV. Each of the constituent amino acids of the tripeptide acv are activated as aminoacyl-adenylates with peptide bonds formed through the participation of amino acid thioester intermediates. The tripeptide ACV is then cyclized to form isopenicillin N (IPN) by the isopenicillin N synthase ipnA that forms the beta-lactam nucleus. Finally, the alpha-aminoadipyl side chain is exchanged for phenylacetic acid by the isopenicillin N acyltransferase aatA to yield penicillin. This step occurs in the peroxisomal matrix and the penM and paaT transporters are involved in the isopenicillin N and phenylacetic acid import into the peroxisome, respectively. This is Isopenicillin N synthase from Penicillium rubens (strain ATCC 28089 / DSM 1075 / NRRL 1951 / Wisconsin 54-1255) (Penicillium chrysogenum).